A 100-amino-acid chain; its full sequence is Small ribosomal subunit protein uS14c (100 aa).

It belongs to the universal ribosomal protein uS14 family. As to quaternary structure, part of the 30S ribosomal subunit.

The protein resides in the plastid. The protein localises to the chloroplast. Its function is as follows. Binds 16S rRNA, required for the assembly of 30S particles. The sequence is that of Small ribosomal subunit protein uS14c from Cyanidium caldarium (Red alga).